Reading from the N-terminus, the 419-residue chain is rRNA methyltransferase 3, mitochondrial (419 aa).

The transit peptide at 1–39 (MAALCGGMLRGCILKPLGLSGSLQLKRNVRALRRTPVRV) directs the protein to the mitochondrion. Positions 42 to 68 (ADEEGRERKQVEASRQRQPRQNESQAC) are disordered. The segment covering 44–56 (EEGRERKQVEASR) has biased composition (basic and acidic residues). S-adenosyl-L-methionine is bound by residues Gly357, Ile381, and Leu390.

This sequence belongs to the class IV-like SAM-binding methyltransferase superfamily. RNA methyltransferase TrmH family.

The protein localises to the mitochondrion. The enzyme catalyses a uridine in rRNA + S-adenosyl-L-methionine = a 2'-O-methyluridine in rRNA + S-adenosyl-L-homocysteine + H(+). In terms of biological role, S-adenosyl-L-methionine-dependent 2'-O-ribose methyltransferase that catalyzes the formation of 2'-O-methylguanosine at position 1370 (Gm1370) in the mitochondrial large subunit ribosomal RNA (mtLSU rRNA), a conserved modification in the peptidyl transferase domain of the mtLSU rRNA. Also required for formation of 2'-O-methyluridine at position 1369 (Um1369) mediated by MRM2. The chain is rRNA methyltransferase 3, mitochondrial from Xenopus laevis (African clawed frog).